A 286-amino-acid chain; its full sequence is Glycine--tRNA ligase alpha subunit (286 aa).

Belongs to the class-II aminoacyl-tRNA synthetase family. Tetramer of two alpha and two beta subunits.

The protein resides in the cytoplasm. The catalysed reaction is tRNA(Gly) + glycine + ATP = glycyl-tRNA(Gly) + AMP + diphosphate. The protein is Glycine--tRNA ligase alpha subunit (glyQ) of Thermotoga maritima (strain ATCC 43589 / DSM 3109 / JCM 10099 / NBRC 100826 / MSB8).